The following is a 500-amino-acid chain: Probable trehalose-phosphate phosphatase 8 (500 aa).

This sequence belongs to the trehalose phosphatase family. It depends on a divalent metal cation as a cofactor.

It catalyses the reaction alpha,alpha-trehalose 6-phosphate + H2O = alpha,alpha-trehalose + phosphate. The protein operates within glycan biosynthesis; trehalose biosynthesis. In terms of biological role, removes the phosphate from trehalose 6-phosphate to produce free trehalose. Trehalose accumulation in plant may improve abiotic stress tolerance. This Oryza sativa subsp. japonica (Rice) protein is Probable trehalose-phosphate phosphatase 8 (TPP8).